The chain runs to 215 residues: Cytochrome b6 (215 aa).

A helical transmembrane segment spans residues 32-52 (IFYCLGGITLTCFLVQVATGF). Cys-35 is a binding site for heme c. His-86 and His-100 together coordinate heme b. The next 3 helical transmembrane spans lie at 90–110 (ASMM…TGGF), 116–136 (LTWV…VTGY), and 186–206 (LHTF…FSMI). Positions 187 and 202 each coordinate heme b.

It belongs to the cytochrome b family. PetB subfamily. In terms of assembly, the 4 large subunits of the cytochrome b6-f complex are cytochrome b6, subunit IV (17 kDa polypeptide, PetD), cytochrome f and the Rieske protein, while the 4 small subunits are PetG, PetL, PetM and PetN. The complex functions as a dimer. Heme b is required as a cofactor. It depends on heme c as a cofactor.

It is found in the plastid. It localises to the chloroplast thylakoid membrane. In terms of biological role, component of the cytochrome b6-f complex, which mediates electron transfer between photosystem II (PSII) and photosystem I (PSI), cyclic electron flow around PSI, and state transitions. The sequence is that of Cytochrome b6 from Lotus japonicus (Lotus corniculatus var. japonicus).